A 73-amino-acid chain; its full sequence is Neurogranin (73 aa).

The region spanning 26 to 55 is the IQ domain; it reads ANAAAAKIQASFRGHMTRKKIKGGEIDRKT. Phosphoserine; by PKC is present on Ser36. A compositionally biased stretch (basic and acidic residues) spans 47–59; the sequence is KGGEIDRKTKDAE. The tract at residues 47 to 73 is disordered; the sequence is KGGEIDRKTKDAECANSTRGGDLRNGD.

The protein belongs to the neurogranin family.

Its function is as follows. Acts as a 'third messenger' substrate of protein kinase C-mediated molecular cascades during synaptic development and remodeling. Binds to calmodulin in the absence of calcium. The sequence is that of Neurogranin (NRGN) from Serinus canaria (Island canary).